The following is an 80-amino-acid chain: Defensin-like protein 16 (80 aa).

Residues 1–29 form the signal peptide; sequence MAKFASIITLIFAALVLFAAFDAPAMVEA. Gln-30 is subject to Pyrrolidone carboxylic acid. 4 disulfides stabilise this stretch: Cys-33-Cys-80, Cys-44-Cys-65, Cys-50-Cys-74, and Cys-54-Cys-76.

The protein belongs to the DEFL family. As to expression, predominantly expressed in leaves.

It localises to the secreted. Functionally, confers broad-spectrum resistance to pathogens. Has antifungal activity in vitro. In Arabidopsis thaliana (Mouse-ear cress), this protein is Defensin-like protein 16 (PDF1.2A).